The primary structure comprises 100 residues: Small ribosomal subunit protein uS14c (100 aa).

The protein belongs to the universal ribosomal protein uS14 family. Part of the 30S ribosomal subunit.

It is found in the plastid. It localises to the chloroplast. Functionally, binds 16S rRNA, required for the assembly of 30S particles. In Chlorokybus atmophyticus (Soil alga), this protein is Small ribosomal subunit protein uS14c.